We begin with the raw amino-acid sequence, 66 residues long: UPF0370 protein YpfN (66 aa).

A helical membrane pass occupies residues 4-24 (LAKYWWILVLVFLVGVLLNVI). A disordered region spans residues 39–66 (KPELPPHRDFNDKWDDEDDWPKKDQPKK). Residues 42-51 (LPPHRDFNDK) are compositionally biased toward basic and acidic residues.

The protein belongs to the UPF0370 family.

It is found in the cell membrane. This is UPF0370 protein YpfN from Salmonella paratyphi C (strain RKS4594).